Here is a 134-residue protein sequence, read N- to C-terminus: Profilin-3 (134 aa).

A disulfide bond links cysteine 13 and cysteine 118. The short motif at 84–100 (AVIRGKKGSGGITIKKT) is the Involved in PIP2 interaction element. Position 114 is a phosphothreonine (threonine 114).

This sequence belongs to the profilin family. In terms of assembly, occurs in many kinds of cells as a complex with monomeric actin in a 1:1 ratio. Phosphorylated by MAP kinases.

The protein localises to the cytoplasm. It is found in the cytoskeleton. Its function is as follows. Binds to actin and affects the structure of the cytoskeleton. At high concentrations, profilin prevents the polymerization of actin, whereas it enhances it at low concentrations. This Olea europaea (Common olive) protein is Profilin-3.